Reading from the N-terminus, the 411-residue chain is Proteasome-activating nucleotidase 2 (411 aa).

Residues 35–75 are a coiled coil; it reads IVAVNGELQAQLDDVEARREELREEVNRLQRENETLKTASL. Residues 196–201 and His335 contribute to the ATP site; that span reads GTGKTM. The tract at residues 408 to 411 is docks into pockets in the proteasome alpha-ring to cause gate opening; the sequence is SYIQ.

Belongs to the AAA ATPase family. In terms of assembly, homohexamer. The hexameric complex has a two-ring architecture resembling a top hat that caps the 20S proteasome core at one or both ends. Upon ATP-binding, the C-terminus of PAN interacts with the alpha-rings of the proteasome core by binding to the intersubunit pockets.

It localises to the cytoplasm. ATPase which is responsible for recognizing, binding, unfolding and translocation of substrate proteins into the archaeal 20S proteasome core particle. Is essential for opening the gate of the 20S proteasome via an interaction with its C-terminus, thereby allowing substrate entry and access to the site of proteolysis. Thus, the C-termini of the proteasomal ATPase function like a 'key in a lock' to induce gate opening and therefore regulate proteolysis. Unfolding activity requires energy from ATP hydrolysis, whereas ATP binding alone promotes ATPase-20S proteasome association which triggers gate opening, and supports translocation of unfolded substrates. This chain is Proteasome-activating nucleotidase 2, found in Halobacterium salinarum (strain ATCC 700922 / JCM 11081 / NRC-1) (Halobacterium halobium).